Reading from the N-terminus, the 361-residue chain is Zinc transporter ZIP13 (361 aa).

At 1–6 (MPGCPC) the chain is on the lumenal side. The helical transmembrane segment at 7 to 27 (PGCGMAGQRLLFLTVLALELL) threads the bilayer. The Cytoplasmic portion of the chain corresponds to 28-68 (ERAGGSQPALRSLGAAAACRLDSKESESWGALLSGERLDTW). Residues 69 to 89 (ICSLLGSLMVGLSGVFPLLVI) form a helical membrane-spanning segment. The Lumenal portion of the chain corresponds to 90 to 108 (PLEMGTMLQSEAGAWRLKQ). A helical transmembrane segment spans residues 109 to 129 (LLSFALGGLLGNVFLHLLPEA). Over 130–150 (WAYTCNISPGVEGQSLQRQQQ) the chain is Cytoplasmic. A helical transmembrane segment spans residues 151 to 171 (LGLWVIAGFLTFLALEKMFLN). Over 172–233 (CKEEDPSQAP…TIDNFTHGLA (62 aa)) the chain is Lumenal. Residues 234-254 (VAASFLVSKKIGLLTTMAILL) traverse the membrane as a helical segment. An XEXPHE-motif motif is present at residues 255–260 (HEIPHE). Residues 255 to 276 (HEIPHEVGDFAILLRAGFDRWT) are Cytoplasmic-facing. Residues 277–297 (AAKLQFSTALGGLLGACFAIC) form a helical membrane-spanning segment. Residues 298 to 307 (TQSPKGVEET) lie on the Lumenal side of the membrane. A helical transmembrane segment spans residues 308–328 (VVWTLPFTSGGFLYVALVNVL). Residues 329-340 (PDLLEEDDPWHL) are Cytoplasmic-facing. Residues 341–361 (NPPLPTGTPCSRCCCSAPVSW) traverse the membrane as a helical segment.

This sequence belongs to the ZIP transporter (TC 2.A.5) family. Homodimer.

It localises to the golgi apparatus membrane. Its subcellular location is the cytoplasmic vesicle membrane. It is found in the endoplasmic reticulum membrane. It catalyses the reaction Zn(2+)(in) = Zn(2+)(out). Its function is as follows. Functions as a zinc transporter transporting Zn(2+) from the Golgi apparatus to the cytosol and thus influences the zinc level at least in areas of the cytosol. May regulate beige adipocyte differentiation. This chain is Zinc transporter ZIP13, found in Rattus norvegicus (Rat).